Here is a 671-residue protein sequence, read N- to C-terminus: cGMP-dependent protein kinase 1 (671 aa).

N-acetylserine is present on Ser-2. Residues 2 to 59 adopt a coiled-coil conformation; that stretch reads SELEEDFAKILMLKEERIKELEKRLSEKEEEIQELKRKLHKCQSVLPVPSTHIGPRTT. A required for dimerization region spans residues 2–102; the sequence is SELEEDFAKI…LIKEAILDND (101 aa). Residues 9–44 form a leucine-zipper region; the sequence is AKILMLKEERIKELEKRLSEKEEEIQELKRKLHKCQ. The interval 50–75 is autoinhibitory domain; the sequence is PSTHIGPRTTRAQGISAEPQTYRSFH. Thr-59 bears the Phosphothreonine; by autocatalysis mark. The interval 103–220 is cGMP-binding, high affinity; the sequence is FMKNLELSQI…EYMEFLKSVP (118 aa). 3',5'-cyclic GMP-binding positions include 167-170, 177-178, Arg-282, 291-294, 301-302, and Tyr-336; these read GELA, RT, and GEKA. Residues 221–341 form a cGMP-binding, low affinity region; it reads TFQSLPDEIL…SNKAYEDAEA (121 aa). One can recognise a Protein kinase domain in the interval 360–619; it reads FNIIDTLGVG…VKDIQKHKWF (260 aa). ATP-binding positions include 366 to 374 and Lys-390; that span reads LGVGGFGRV. Asp-484 serves as the catalytic Proton acceptor. Thr-515 carries the phosphothreonine modification. The AGC-kinase C-terminal domain occupies 620 to 671; that stretch reads EGFNWEGLRKGTLTPPIIPSVASPTDTSNFDSFPEDSDEPPPDDNSGWDIDF. The segment at 635-671 is disordered; that stretch reads PIIPSVASPTDTSNFDSFPEDSDEPPPDDNSGWDIDF. Over residues 652 to 661 the composition is skewed to acidic residues; the sequence is FPEDSDEPPP.

It belongs to the protein kinase superfamily. AGC Ser/Thr protein kinase family. cGMP subfamily. Isoform alpha: parallel homodimer or heterodimer and also heterotetramer. Interacts directly with PPP1R12A. Non-covalent dimer of dimer of PRKG1-PRKG1 and PPP1R12A-PPP1R12A. This interaction targets PRKG1 to stress fibers to mediate smooth muscle cell relaxation and vasodilation in responses to rises in cGMP. Isoform beta: antiparallel homodimer. Part of cGMP kinase signaling complex at least composed of ACTA2/alpha-actin, CNN1/calponin H1, PLN/phospholamban, PRKG1 and ITPR1. Interacts with IRAG1. Forms a stable complex with ITPR1, IRAG1, and isoform beta of PRKG1. Interacts with TRPC7 (via ankyrin repeat domain). Isoform alpha interacts with RGS2. Interacts with GTF2I. Autophosphorylation increases kinase activity. Post-translationally, 65 kDa monomer is produced by proteolytic cleavage. As to expression, detected in cerebellum, hippocampus, dorsomedial hypothalamus, medulla, subcommissural organ, cerebral cortex, amygdala, habenulae, various hypothalamic regions, olfactory bulb, pituitary gland, and retina. Isoform alpha is prominent in the cerebellum and medulla, whereas isoform Beta is predominant in the cortex, hippocampus, hypothalamus, and olfactory bulb.

It is found in the cytoplasm. The enzyme catalyses L-seryl-[protein] + ATP = O-phospho-L-seryl-[protein] + ADP + H(+). It carries out the reaction L-threonyl-[protein] + ATP = O-phospho-L-threonyl-[protein] + ADP + H(+). In the absence of cGMP, PRKG1 activity is suppressed by autoinhibitory contacts. Functionally, serine/threonine protein kinase that acts as a key mediator of the nitric oxide (NO)/cGMP signaling pathway. GMP binding activates PRKG1, which phosphorylates serines and threonines on many cellular proteins. Numerous protein targets for PRKG1 phosphorylation are implicated in modulating cellular calcium, but the contribution of each of these targets may vary substantially among cell types. Proteins that are phosphorylated by PRKG1 regulate platelet activation and adhesion, smooth muscle contraction, cardiac function, gene expression, feedback of the NO-signaling pathway, and other processes involved in several aspects of the CNS like axon guidance, hippocampal and cerebellar learning, circadian rhythm and nociception. Smooth muscle relaxation is mediated through lowering of intracellular free calcium, by desensitization of contractile proteins to calcium, and by decrease in the contractile state of smooth muscle or in platelet activation. Regulates intracellular calcium levels via several pathways: phosphorylates IRAG1 and inhibits IP3-induced Ca(2+) release from intracellular stores, phosphorylation of KCNMA1 (BKCa) channels decreases intracellular Ca(2+) levels, which leads to increased opening of this channel. PRKG1 phosphorylates the canonical transient receptor potential channel (TRPC) family which inactivates the associated inward calcium current. Another mode of action of NO/cGMP/PKGI signaling involves PKGI-mediated inactivation of the Ras homolog gene family member A (RhoA). Phosphorylation of RHOA by PRKG1 blocks the action of this protein in myriad processes: regulation of RHOA translocation; decreasing contraction; controlling vesicle trafficking, reduction of myosin light chain phosphorylation resulting in vasorelaxation. Activation of PRKG1 by NO signaling also alters gene expression in a number of tissues. In smooth muscle cells, increased cGMP and PRKG1 activity influence expression of smooth muscle-specific contractile proteins, levels of proteins in the NO/cGMP signaling pathway, down-regulation of the matrix proteins osteopontin and thrombospondin-1 to limit smooth muscle cell migration and phenotype. Regulates vasodilator-stimulated phosphoprotein (VASP) functions in platelets and smooth muscle. The protein is cGMP-dependent protein kinase 1 (Prkg1) of Mus musculus (Mouse).